The primary structure comprises 298 residues: NAD-dependent L-serine dehydrogenase (298 aa).

Residues 2–31, 65–66, Pro66, and Thr96 each bind NAD(+); these read KQIAFIGLGHMGAPMATNLLKAGYLLNVFD and LP. Lys171 is an active-site residue. Lys246 is an NAD(+) binding site.

The protein belongs to the HIBADH-related family. In terms of assembly, homotetramer, dimer of dimers.

The enzyme catalyses L-serine + NAD(+) = aminoacetaldehyde + CO2 + NADH. It participates in amino-acid degradation. Functionally, NAD-dependent L-serine dehydrogenase that catalyzes the oxidation of L-serine and methyl-L-serine and is possibly involved in serine catabolism. Has low activity toward beta-hydroxyisobutyrate. This is NAD-dependent L-serine dehydrogenase from Pseudomonas aeruginosa (strain ATCC 15692 / DSM 22644 / CIP 104116 / JCM 14847 / LMG 12228 / 1C / PRS 101 / PAO1).